Consider the following 447-residue polypeptide: Rab GDP dissociation inhibitor alpha (447 aa).

Residue Ser-427 is modified to Phosphoserine.

Belongs to the Rab GDI family. In terms of assembly, interacts with RHOH. Interacts with the non-phosphorylated forms of RAB1A, RAB3A, RAB5A, RAB5B, RAB5C, RAB8A, RAB8B, RAB10, RAB12, RAB35, and RAB43. Interacts with RAB3A.

It is found in the cytoplasm. It localises to the golgi apparatus. The protein resides in the trans-Golgi network. Regulates the GDP/GTP exchange reaction of most Rab proteins by inhibiting the dissociation of GDP from them, and the subsequent binding of GTP to them. Promotes the dissociation of GDP-bound Rab proteins from the membrane and inhibits their activation. Promotes the dissociation of RAB1A, RAB3A, RAB5A and RAB10 from membranes. The polypeptide is Rab GDP dissociation inhibitor alpha (GDI1) (Bos taurus (Bovine)).